The sequence spans 297 residues: uncharacterized protein (297 aa).

The next 7 helical transmembrane spans lie at 14–34 (LFLMFIGTVSFLFIFIPFLKF), 55–75 (LLLGPIYGFFAVMLVTLIYFF), 81–101 (FYFGIYSLIPPTLAVISAGAL), 110–130 (AIILIVGLLLFYLTDVGRVAF), 135–155 (LSTLALLLILIFREKISKLLF), 163–183 (IVGATILSFSSVMTDHLYGSI), and 208–228 (LIMTVIGAFFVIFAIEISKCF).

The protein localises to the cell membrane. This is an uncharacterized protein from Methanocaldococcus jannaschii (strain ATCC 43067 / DSM 2661 / JAL-1 / JCM 10045 / NBRC 100440) (Methanococcus jannaschii).